Consider the following 291-residue polypeptide: NAD kinase (291 aa).

The active-site Proton acceptor is the D73. NAD(+)-binding positions include 73–74, 147–148, R175, D177, 188–193, A212, and Q246; these read DG, ND, and TAYALS.

The protein belongs to the NAD kinase family. Requires a divalent metal cation as cofactor.

The protein localises to the cytoplasm. It carries out the reaction NAD(+) + ATP = ADP + NADP(+) + H(+). In terms of biological role, involved in the regulation of the intracellular balance of NAD and NADP, and is a key enzyme in the biosynthesis of NADP. Catalyzes specifically the phosphorylation on 2'-hydroxyl of the adenosine moiety of NAD to yield NADP. This Polaromonas naphthalenivorans (strain CJ2) protein is NAD kinase.